Consider the following 181-residue polypeptide: Organ-specific protein S2 (181 aa).

4 tandem repeats follow at residues 59–84 (HAKE…DNEI), 85–110 (HAKE…DNEI), 111–136 (HANE…DNEI), and 137–162 (HANE…DNEI). The tract at residues 59-162 (HAKENMGAIG…NASAYGDNEI (104 aa)) is 4 X 26 AA tandem repeats. The tract at residues 94 to 181 (GEFEPRPNAS…PRPSMTKYNA (88 aa)) is disordered.

To organ specific protein P4. In terms of tissue distribution, expressed in stems.

This Pisum sativum (Garden pea) protein is Organ-specific protein S2.